The following is a 49-amino-acid chain: Large ribosomal subunit protein bL33B (49 aa).

Belongs to the bacterial ribosomal protein bL33 family.

The sequence is that of Large ribosomal subunit protein bL33B from Geobacillus thermodenitrificans (strain NG80-2).